Reading from the N-terminus, the 217-residue chain is Protein DJ-1alpha (217 aa).

Cysteine 133 (nucleophile) is an active-site residue. Cysteine sulfinic acid (-SO2H); alternate is present on cysteine 133.

Expressed in testis (at protein level).

It localises to the cytoplasm. The protein resides in the nucleus. The protein localises to the mitochondrion. Plays an important role in cell protection against oxidative stress and cell death acting as oxidative stress sensor. Does not play a role in methylglyoxal detoxification. The sequence is that of Protein DJ-1alpha from Drosophila melanogaster (Fruit fly).